A 179-amino-acid polypeptide reads, in one-letter code: Large ribosomal subunit protein uL5 (179 aa).

Belongs to the universal ribosomal protein uL5 family. As to quaternary structure, part of the 50S ribosomal subunit; part of the 5S rRNA/L5/L18/L25 subcomplex. Contacts the 5S rRNA and the P site tRNA. Forms a bridge to the 30S subunit in the 70S ribosome.

In terms of biological role, this is one of the proteins that bind and probably mediate the attachment of the 5S RNA into the large ribosomal subunit, where it forms part of the central protuberance. In the 70S ribosome it contacts protein S13 of the 30S subunit (bridge B1b), connecting the 2 subunits; this bridge is implicated in subunit movement. Contacts the P site tRNA; the 5S rRNA and some of its associated proteins might help stabilize positioning of ribosome-bound tRNAs. The protein is Large ribosomal subunit protein uL5 of Rickettsia africae (strain ESF-5).